Reading from the N-terminus, the 532-residue chain is Flavin-containing monooxygenase 1 (532 aa).

Topologically, residues 1–510 (MVKRVAIVGA…TRTVQETPST (510 aa)) are lumenal. FAD contacts are provided by residues 9 to 13 (GAGVS), glutamate 32, 40 to 41 (LW), and 61 to 62 (NS). NADP(+) is bound by residues 60–61 (SN) and 195–198 (SGTD). Residues 511–531 (FETLLKLFSFLALLVAVFFIF) traverse the membrane as a helical segment. Residue leucine 532 is a topological domain, cytoplasmic.

Belongs to the FMO family. FAD is required as a cofactor. As to expression, expressed in liver, lung and kidney and to a lesser extent in the heart and brain.

The protein localises to the endoplasmic reticulum membrane. It catalyses the reaction hypotaurine + NADPH + O2 + H(+) = taurine + NADP(+) + H2O. It carries out the reaction hypotaurine + NADH + O2 + H(+) = taurine + NAD(+) + H2O. The enzyme catalyses trimethylamine + NADPH + O2 = trimethylamine N-oxide + NADP(+) + H2O. The catalysed reaction is N,N-dimethylaniline + NADPH + O2 + H(+) = N,N-dimethylaniline N-oxide + NADP(+) + H2O. Functionally, broad spectrum monooxygenase that catalyzes the oxygenation of a wide variety of nitrogen- and sulfur-containing compounds including xenobiotics. Catalyzes the S-oxygenation of hypotaurine to produce taurine, an organic osmolyte involved in cell volume regulation as well as a variety of cytoprotective and developmental processes. In vitro, catalyzes the N-oxygenation of trimethylamine (TMA) to produce trimethylamine N-oxide (TMAO) and could therefore participate to the detoxification of this compound that is generated by the action of gut microbiota from dietary precursors such as choline, choline containing compounds, betaine or L-carnitine. The polypeptide is Flavin-containing monooxygenase 1 (Rattus norvegicus (Rat)).